Reading from the N-terminus, the 379-residue chain is uncharacterized protein (379 aa).

This is an uncharacterized protein from Tortricidae (ClGV).